The chain runs to 342 residues: S-adenosylmethionine:tRNA ribosyltransferase-isomerase (342 aa).

Belongs to the QueA family. Monomer.

It is found in the cytoplasm. The catalysed reaction is 7-aminomethyl-7-carbaguanosine(34) in tRNA + S-adenosyl-L-methionine = epoxyqueuosine(34) in tRNA + adenine + L-methionine + 2 H(+). It participates in tRNA modification; tRNA-queuosine biosynthesis. Its function is as follows. Transfers and isomerizes the ribose moiety from AdoMet to the 7-aminomethyl group of 7-deazaguanine (preQ1-tRNA) to give epoxyqueuosine (oQ-tRNA). This is S-adenosylmethionine:tRNA ribosyltransferase-isomerase from Streptococcus sanguinis (strain SK36).